The following is a 570-amino-acid chain: MNVVFAVKQYISKMIEDSGPGMKVLLMDKETTGIVSMVYTQSEILQKEVYLFERIDSQNREIMKHLKAICFLRPTKENVDYIIQELRRPKYTIYFIYFSNVISKSDVKSLAEADEQEVVAEVQEFYGDYIAVNPHLFSLNILGCCQGRNWDPAQLSRTTQGLTALLLSLKKCPMIRYQLSSEAAKRLAECVKQVITKEYELFEFRRTEVPPLLLILDRCDDAITPLLNQWTYQAMVHELLGINNNRIDLSRVPGISKDLREVVLSAENDEFYANNMYLNFAEIGSNIKNLMEDFQKKKPKEQQKLESIADMKAFVENYPQFKKMSGTVSKHVTVVGELSRLVSERNLLEVSEVEQELACQNDHSSALQNIKRLLQNPKVTEFDAARLVMLYALHYERHSSNSLPGLMMDLRNKGVSEKYRKLVSAVVEYGGKRVRGSDLFSPKDAVAITKQFLKGLKGVENVYTQHQPFLHETLDHLIKGRLKENLYPYLGPSTLRDRPQDIIVFVIGGATYEEALTVYNLNRTTPGVRIVLGGTTVHNTKSFLEEVLASGLHSRSKESSQVTSRSASRR.

Serine 307 and serine 441 each carry phosphoserine.

This sequence belongs to the STXBP/unc-18/SEC1 family. Interacts with STX6. Interacts with ZFYVE20. Ubiquitous. Expression was highest in testis, heart and brain, intermediate in kidney, spleen, prostate, ovary, small intestine and thymus and low in lung, skeletal muscle, placenta, colon, pancreas, peripheral blood leukocytes and liver.

The protein localises to the golgi apparatus membrane. The protein resides in the endosome membrane. May play a role in vesicle-mediated protein trafficking from the Golgi stack through the trans-Golgi network. The polypeptide is Vacuolar protein sorting-associated protein 45 (VPS45) (Homo sapiens (Human)).